A 552-amino-acid polypeptide reads, in one-letter code: Segmentation polarity homeobox protein engrailed (552 aa).

Positions 93 to 108 are enriched in low complexity; it reads SGSGSPASCSTPASST. Disordered regions lie at residues 93-112, 130-171, 309-419, and 433-460; these read SGSG…PLTI, THTT…TAKP, PAAP…GGKN, and DRPS…PRTA. A compositionally biased stretch (acidic residues) spans 135–151; sequence EEEEAEEDDDIDVDVDD. Positions 317 to 382 are enriched in low complexity; that stretch reads PPLSSSASSL…SGSGVNASSP (66 aa). The segment covering 446-457 has biased composition (basic and acidic residues); sequence QPKDKTNDEKRP. The homeobox DNA-binding region spans 454–513; sequence EKRPRTAFSSEQLARLKREFNENRYLTERRRQQLSSELGLNEAQIKIWFQNKRAKIKKST.

Belongs to the engrailed homeobox family. Phosphorylated. Phosphorylation may directly or allosterically modify its function.

Its subcellular location is the nucleus. Its function is as follows. This protein specifies the body segmentation pattern. It is required for the development of the central nervous system. Transcriptional regulator that represses activated promoters. Wg signaling operates by inactivating the SGG repression of EN autoactivation. The sequence is that of Segmentation polarity homeobox protein engrailed (en) from Drosophila melanogaster (Fruit fly).